Reading from the N-terminus, the 624-residue chain is ERAD-associated E3 ubiquitin-protein ligase ASI1 (624 aa).

Residues Met-1–Ser-69 lie on the Perinuclear space side of the membrane. Asn-2, Asn-19, and Asn-29 each carry an N-linked (GlcNAc...) asparagine glycan. Residues Val-70–Ile-90 form a helical membrane-spanning segment. At Val-91–Asn-116 the chain is on the nuclear side. Residues Val-117–Gly-137 traverse the membrane as a helical segment. Topologically, residues Lys-138 to Lys-152 are perinuclear space. Residues Phe-153–Ile-173 traverse the membrane as a helical segment. Over Met-174–Asp-209 the chain is Nuclear. A helical transmembrane segment spans residues Tyr-210–Phe-230. The Perinuclear space segment spans residues Arg-231–Pro-273. A helical membrane pass occupies residues Lys-274–Ile-294. Topologically, residues Arg-295–Lys-624 are nuclear. Residues Thr-467–Glu-490 form a disordered region. Residues Ser-468–Glu-490 show a composition bias toward acidic residues. The segment at Cys-568 to Arg-608 adopts an RING-type; atypical zinc-finger fold.

Component of the Asi complex, which contains ASI1, ASI2 and ASI3. Interacts directly with ASI3. Post-translationally, glycosylation is not required for ASI1 function.

The protein resides in the nucleus inner membrane. The catalysed reaction is S-ubiquitinyl-[E2 ubiquitin-conjugating enzyme]-L-cysteine + [acceptor protein]-L-lysine = [E2 ubiquitin-conjugating enzyme]-L-cysteine + N(6)-ubiquitinyl-[acceptor protein]-L-lysine.. E3 ubiquitin-protein ligase which transfers ubiquitin to substrates promoting their degradation. Part of the nuclear inner membrane (INM)-specific branch of the ER-associated degradation (ERAD) pathway, required for the elimination of misfolded proteins in the INM, a specialized ER subdomain. Required for ERG11 degradation. Negative regulator of SPS-sensor signaling. Together with ASI2 and ASI3, prevents the unprocessed precursor forms of STP1 and STP2 that escape cytoplasmic anchoring from inducing SPS-sensor-regulated genes in the absence of inducing signals. Controls amino acid permease (AAP) gene expression in response to amino acid availability, a process mediated by the transcription factors STP1 and STP1. The sequence is that of ERAD-associated E3 ubiquitin-protein ligase ASI1 (ASI1) from Saccharomyces cerevisiae (strain ATCC 204508 / S288c) (Baker's yeast).